The chain runs to 150 residues: D-aminoacyl-tRNA deacylase (150 aa).

Residues 133–134 (GP) carry the Gly-cisPro motif, important for rejection of L-amino acids motif.

The protein belongs to the DTD family. In terms of assembly, homodimer.

It is found in the cytoplasm. It catalyses the reaction glycyl-tRNA(Ala) + H2O = tRNA(Ala) + glycine + H(+). It carries out the reaction a D-aminoacyl-tRNA + H2O = a tRNA + a D-alpha-amino acid + H(+). Its function is as follows. An aminoacyl-tRNA editing enzyme that deacylates mischarged D-aminoacyl-tRNAs. Also deacylates mischarged glycyl-tRNA(Ala), protecting cells against glycine mischarging by AlaRS. Acts via tRNA-based rather than protein-based catalysis; rejects L-amino acids rather than detecting D-amino acids in the active site. By recycling D-aminoacyl-tRNA to D-amino acids and free tRNA molecules, this enzyme counteracts the toxicity associated with the formation of D-aminoacyl-tRNA entities in vivo and helps enforce protein L-homochirality. In Micrococcus luteus (strain ATCC 4698 / DSM 20030 / JCM 1464 / CCM 169 / CCUG 5858 / IAM 1056 / NBRC 3333 / NCIMB 9278 / NCTC 2665 / VKM Ac-2230) (Micrococcus lysodeikticus), this protein is D-aminoacyl-tRNA deacylase.